The sequence spans 279 residues: Acetyl-coenzyme A carboxylase carboxyl transferase subunit beta (279 aa).

Positions 23–279 constitute a CoA carboxyltransferase N-terminal domain; it reads LWWKCEECGA…LVTLFSMLKV (257 aa). The Zn(2+) site is built by C27, C30, C46, and C49. The C4-type zinc finger occupies 27 to 49; the sequence is CEECGAMLHKKQFEDHFFTCAEC.

The protein belongs to the AccD/PCCB family. Acetyl-CoA carboxylase is a heterohexamer composed of biotin carboxyl carrier protein (AccB), biotin carboxylase (AccC) and two subunits each of ACCase subunit alpha (AccA) and ACCase subunit beta (AccD). Zn(2+) is required as a cofactor.

The protein resides in the cytoplasm. The enzyme catalyses N(6)-carboxybiotinyl-L-lysyl-[protein] + acetyl-CoA = N(6)-biotinyl-L-lysyl-[protein] + malonyl-CoA. The protein operates within lipid metabolism; malonyl-CoA biosynthesis; malonyl-CoA from acetyl-CoA: step 1/1. In terms of biological role, component of the acetyl coenzyme A carboxylase (ACC) complex. Biotin carboxylase (BC) catalyzes the carboxylation of biotin on its carrier protein (BCCP) and then the CO(2) group is transferred by the transcarboxylase to acetyl-CoA to form malonyl-CoA. The protein is Acetyl-coenzyme A carboxylase carboxyl transferase subunit beta of Pelodictyon phaeoclathratiforme (strain DSM 5477 / BU-1).